Here is a 214-residue protein sequence, read N- to C-terminus: Thymidylate kinase (214 aa).

10–17 provides a ligand contact to ATP; the sequence is GPDGAGKT.

It belongs to the thymidylate kinase family.

It carries out the reaction dTMP + ATP = dTDP + ADP. Its function is as follows. Phosphorylation of dTMP to form dTDP in both de novo and salvage pathways of dTTP synthesis. This Latilactobacillus sakei subsp. sakei (strain 23K) (Lactobacillus sakei subsp. sakei) protein is Thymidylate kinase.